The primary structure comprises 302 residues: Nudix hydrolase 5 (302 aa).

Residues 122–254 enclose the Nudix hydrolase domain; it reads SHRIGIGAFV…EGNEMFKLIA (133 aa). The Nudix box signature appears at 159–180; that stretch reads GTIKEGESIWAGAVREVKEETD. The Mg(2+) site is built by E174 and E178.

This sequence belongs to the Nudix hydrolase family. Mg(2+) serves as cofactor. Requires Mn(2+) as cofactor. Expressed in roots, stems and leaves.

Its function is as follows. Probably mediates the hydrolysis of some nucleoside diphosphate derivatives. This is Nudix hydrolase 5 (NUDT5) from Arabidopsis thaliana (Mouse-ear cress).